A 235-amino-acid chain; its full sequence is Urease accessory protein UreF (235 aa).

It belongs to the UreF family. In terms of assembly, ureD, UreF and UreG form a complex that acts as a GTP-hydrolysis-dependent molecular chaperone, activating the urease apoprotein by helping to assemble the nickel containing metallocenter of UreC. The UreE protein probably delivers the nickel.

It localises to the cytoplasm. Functionally, required for maturation of urease via the functional incorporation of the urease nickel metallocenter. The polypeptide is Urease accessory protein UreF (Ureaplasma parvum serovar 3 (strain ATCC 27815 / 27 / NCTC 11736)).